The following is a 917-amino-acid chain: Gamma-tubulin complex component 3 (917 aa).

The protein belongs to the TUBGCP family. Gamma-tubulin small complex (Gamma TuSC) is a heterotetrameric complex which contains two molecules of gamma-tubulin, and one molecule each of Dgrip84 and Dgrip91. The gamma-tubulin in this complex binds preferentially to GDP over GTP.

It localises to the cytoplasm. The protein resides in the cytoskeleton. The protein localises to the microtubule organizing center. It is found in the centrosome. Its subcellular location is the perinuclear region. The polypeptide is Gamma-tubulin complex component 3 (Drosophila melanogaster (Fruit fly)).